The chain runs to 217 residues: Neurotrophic factor BDNF precursor form (217 aa).

The propeptide occupies 1–108 (PMKEVSIRGQ…AANMSMRVRR (108 aa)). A glycan (N-linked (GlcNAc...) asparagine) is linked at Asn101. Cystine bridges form between Cys121–Cys188 and Cys166–Cys217.

This sequence belongs to the NGF-beta family.

It is found in the secreted. Promotes the survival of neuronal populations that are all located either in the central nervous system or directly connected to it. The protein is Neurotrophic factor BDNF precursor form (BDNF) of Acrantophis dumerili (Dumeril's ground boa).